Consider the following 428-residue polypeptide: Glutamate-1-semialdehyde 2,1-aminomutase 1 (428 aa).

K267 is modified (N6-(pyridoxal phosphate)lysine).

The protein belongs to the class-III pyridoxal-phosphate-dependent aminotransferase family. HemL subfamily. In terms of assembly, homodimer. Requires pyridoxal 5'-phosphate as cofactor.

Its subcellular location is the cytoplasm. The enzyme catalyses (S)-4-amino-5-oxopentanoate = 5-aminolevulinate. It functions in the pathway porphyrin-containing compound metabolism; protoporphyrin-IX biosynthesis; 5-aminolevulinate from L-glutamyl-tRNA(Glu): step 2/2. The protein is Glutamate-1-semialdehyde 2,1-aminomutase 1 (hemL1) of Staphylococcus aureus (strain NCTC 8325 / PS 47).